Here is a 1358-residue protein sequence, read N- to C-terminus: DNA-directed RNA polymerase subunit beta (1358 aa).

The protein belongs to the RNA polymerase beta chain family. The RNAP catalytic core consists of 2 alpha, 1 beta, 1 beta' and 1 omega subunit. When a sigma factor is associated with the core the holoenzyme is formed, which can initiate transcription.

The enzyme catalyses RNA(n) + a ribonucleoside 5'-triphosphate = RNA(n+1) + diphosphate. In terms of biological role, DNA-dependent RNA polymerase catalyzes the transcription of DNA into RNA using the four ribonucleoside triphosphates as substrates. The protein is DNA-directed RNA polymerase subunit beta of Francisella philomiragia subsp. philomiragia (strain ATCC 25017 / CCUG 19701 / FSC 153 / O#319-036).